Consider the following 98-residue polypeptide: Putative pterin-4-alpha-carbinolamine dehydratase (98 aa).

Belongs to the pterin-4-alpha-carbinolamine dehydratase family.

It carries out the reaction (4aS,6R)-4a-hydroxy-L-erythro-5,6,7,8-tetrahydrobiopterin = (6R)-L-erythro-6,7-dihydrobiopterin + H2O. This chain is Putative pterin-4-alpha-carbinolamine dehydratase, found in Jannaschia sp. (strain CCS1).